Reading from the N-terminus, the 245-residue chain is 2,3-bisphosphoglycerate-dependent phosphoglycerate mutase (245 aa).

Substrate is bound by residues 8 to 15 (RHGQSLWN), 21 to 22 (TG), arginine 60, 87 to 90 (ERHY), lysine 98, 114 to 115 (RR), and 183 to 184 (GN). Histidine 9 (tele-phosphohistidine intermediate) is an active-site residue. Glutamate 87 acts as the Proton donor/acceptor in catalysis.

Belongs to the phosphoglycerate mutase family. BPG-dependent PGAM subfamily.

The catalysed reaction is (2R)-2-phosphoglycerate = (2R)-3-phosphoglycerate. The protein operates within carbohydrate degradation; glycolysis; pyruvate from D-glyceraldehyde 3-phosphate: step 3/5. Its function is as follows. Catalyzes the interconversion of 2-phosphoglycerate and 3-phosphoglycerate. The protein is 2,3-bisphosphoglycerate-dependent phosphoglycerate mutase of Bacillus thuringiensis (strain Al Hakam).